Here is a 472-residue protein sequence, read N- to C-terminus: Poly(A) polymerase catalytic subunit (472 aa).

Active-site residues include Asp194 and Asp196.

This sequence belongs to the poxviridae poly(A) polymerase catalytic subunit family. In terms of assembly, heterodimer of a large (catalytic) subunit and a small (regulatory) subunit.

The catalysed reaction is RNA(n) + ATP = RNA(n)-3'-adenine ribonucleotide + diphosphate. Polymerase that creates the 3'-poly(A) tail of mRNA's. The sequence is that of Poly(A) polymerase catalytic subunit (PAPL) from Serinus (CNPV).